A 361-amino-acid polypeptide reads, in one-letter code: Chorismate synthase (361 aa).

NADP(+) is bound by residues R48 and R54. FMN-binding positions include 125 to 127, 238 to 239, G278, 293 to 297, and R319; these read RSS, NA, and KPTSS.

It belongs to the chorismate synthase family. In terms of assembly, homotetramer. FMNH2 serves as cofactor.

The catalysed reaction is 5-O-(1-carboxyvinyl)-3-phosphoshikimate = chorismate + phosphate. Its pathway is metabolic intermediate biosynthesis; chorismate biosynthesis; chorismate from D-erythrose 4-phosphate and phosphoenolpyruvate: step 7/7. In terms of biological role, catalyzes the anti-1,4-elimination of the C-3 phosphate and the C-6 proR hydrogen from 5-enolpyruvylshikimate-3-phosphate (EPSP) to yield chorismate, which is the branch point compound that serves as the starting substrate for the three terminal pathways of aromatic amino acid biosynthesis. This reaction introduces a second double bond into the aromatic ring system. This Vibrio vulnificus (strain CMCP6) protein is Chorismate synthase.